A 654-amino-acid polypeptide reads, in one-letter code: Sucrose:sucrose 1-fructosyltransferase (654 aa).

Residues 1–106 constitute a propeptide that is removed on maturation; that stretch reads MESSAVVPGT…VSEKASGAYS (106 aa). N-linked (GlcNAc...) asparagine glycosylation is present at Asn-32. Asp-136 is a catalytic residue. 5 N-linked (GlcNAc...) asparagine glycosylation sites follow: Asn-328, Asn-457, Asn-491, Asn-506, and Asn-625.

The protein belongs to the glycosyl hydrolase 32 family. Monomer. As to expression, accumulates at the base of growing leaves.

It localises to the vacuole. It carries out the reaction 2 sucrose = 1(F)-beta-D-fructosylsucrose + D-glucose. Functionally, transferase involved in fructan biosynthesis that catalyzes the production of 1-kestose (fructose and nystose to a lower extent) from sucrose. Also exhibits some hydrolase activity toward 1-kestose, thus producing fructose and sucrose. A weak fructosyltransferase activity leads to the formation of nystose from 1-kestose. This chain is Sucrose:sucrose 1-fructosyltransferase (1-SST), found in Festuca arundinacea (Tall fescue).